The following is an 821-amino-acid chain: MENITQPTQQSTQATQRFLIEKFSQEQIGENIVCRVICTTGQIPIRDLSADISQVLKEKRSIKKVWTFGRNPACDYHLGNISRLSNKHFQILLGEDGNLLLNDISTNGTWLNGQKVEKNSNQLLSQGDEITVGVGVESDILSLVIFINDKFKQCLEQNKVDRIRSNLKNTSKIASPGLTSSTASSMVANKTGIFKDFSIIDEVVGQGAFATVKKAIERTTGKTFAVKIISKRKVIGNMDGVTRELEVLQKLNHPRIVRLKGFYEDTESYYMVMEFVSGGDLMDFVAAHGAVGEDAGREISRQILTAIKYIHSMGISHRDLKPDNILIEQDDPVLVKITDFGLAKVQGNGSFMKTFCGTLAYVAPEVIRGKDTSVSPDEYEERNEYSSLVDMWSMGCLVYVILTGHLPFSGSTQDQLYKQIGRGSYHEGPLKDFRISEEARDFIDSLLQVDPNNRSTAAKALNHPWIKMSPLGSQSYGDFSQISLSQSLSQQKLLENMDDAQYEFVKAQRKLQMEQQLQEQDQEDQDGKIQGFKIPAHAPIRYTQPKSIEAETREQKLLHSNNTENVKSSKKKGNGRFLTLKPLPDSIIQESLEIQQGVNPFFIGRSEDCNCKIEDNRLSRVHCFIFKKRHAVGKSMYESPAQGLDDIWYCHTGTNVSYLNNNRMIQGTKFLLQDGDEIKIIWDKNNKFVIGFKVEINDTTGLFNEGLGMLQEQRVVLKQTAEEKDLVKKLTQMMAAQRANQPSASSSSMSAKKPPVSDTNNNGNNSVLNDLVESPINANTGNILKRIHSVSLSQSQIDPSKKVKRAKLDQTSKGPENLQFS.

Residue Ser-24 is modified to Phosphoserine. An FHA 1 domain is found at 66 to 116; the sequence is WTFGRNPACDYHLGNISRLSNKHFQILLGEDGNLLLNDISTNGTWLNGQKV. Ser-175 is modified (phosphoserine). The region spanning 198 to 466 is the Protein kinase domain; that stretch reads SIIDEVVGQG…AAKALNHPWI (269 aa). ATP is bound by residues 204–212 and Lys-227; that span reads VGQGAFATV. Residue Asp-319 is the Proton acceptor of the active site. Ser-547 and Ser-560 each carry phosphoserine. The 64-residue stretch at 601 to 664 folds into the FHA 2 domain; it reads FFIGRSEDCN…NVSYLNNNRM (64 aa). Residues 735-770 form a disordered region; that stretch reads AAQRANQPSASSSSMSAKKPPVSDTNNNGNNSVLND. The span at 742–770 shows a compositional bias: low complexity; the sequence is PSASSSSMSAKKPPVSDTNNNGNNSVLND. Phosphoserine occurs at positions 774 and 793. The tract at residues 791-821 is disordered; sequence SLSQSQIDPSKKVKRAKLDQTSKGPENLQFS. Residues 809–821 are compositionally biased toward polar residues; the sequence is DQTSKGPENLQFS.

The protein belongs to the protein kinase superfamily. CAMK Ser/Thr protein kinase family. CHEK2 subfamily. As to quaternary structure, interacts (via domain FHA 1) with PTC2 (when phosphorylated); the interaction is direct and serves to regulate DNA damage checkpoint signaling. Interacts with PIN4. Post-translationally, autophosphorylated. Phosphorylated in response to DNA double-strand breaks; dephosphorylation is mediated by PTC2 and PTC3.

The protein resides in the nucleus. It catalyses the reaction L-seryl-[protein] + ATP = O-phospho-L-seryl-[protein] + ADP + H(+). The catalysed reaction is L-threonyl-[protein] + ATP = O-phospho-L-threonyl-[protein] + ADP + H(+). The enzyme catalyses L-tyrosyl-[protein] + ATP = O-phospho-L-tyrosyl-[protein] + ADP + H(+). Inactivated by dephosphorylation via recruitment of PTC2. Functionally, controls S-phase checkpoint as well as G1 and G2 DNA damage checkpoints. Phosphorylates proteins on serine, threonine, and tyrosine. Prevents entry into anaphase and mitotic exit after DNA damage via regulation of the Polo kinase CDC5. Seems to be involved in the phosphorylation of RPH1. This Saccharomyces cerevisiae (strain ATCC 204508 / S288c) (Baker's yeast) protein is Serine/threonine-protein kinase RAD53 (RAD53).